Here is a 970-residue protein sequence, read N- to C-terminus: Protein translocase subunit SecA (970 aa).

Residues Gln99, Gly117–Thr121, and Asp631 contribute to the ATP site.

This sequence belongs to the SecA family. Monomer and homodimer. Part of the essential Sec protein translocation apparatus which comprises SecA, SecYEG and auxiliary proteins SecDF. Other proteins may also be involved.

It localises to the cell inner membrane. The protein resides in the cytoplasm. The catalysed reaction is ATP + H2O + cellular proteinSide 1 = ADP + phosphate + cellular proteinSide 2.. Its function is as follows. Part of the Sec protein translocase complex. Interacts with the SecYEG preprotein conducting channel. Has a central role in coupling the hydrolysis of ATP to the transfer of proteins into and across the cell membrane, serving as an ATP-driven molecular motor driving the stepwise translocation of polypeptide chains across the membrane. In Chlamydia pneumoniae (Chlamydophila pneumoniae), this protein is Protein translocase subunit SecA.